The following is a 937-amino-acid chain: Guanine nucleotide exchange protein SMCR8 (937 aa).

The required for the homodimerization of the C9orf72-SMCR8 complex stretch occupies residues 1-349 (MISAPDVVAF…HIEHMFRGDL (349 aa)). The region spanning 48–220 (LSGAKFSRDF…TETEIQKKAN (173 aa)) is the uDENN FLCN/SMCR8-type domain. 2 disordered regions span residues 274–293 (IQDQASQASTTSNPDESADT) and 384–405 (EKQESIPSKPSQDRPPSSSLEE). Polar residues-rich tracts occupy residues 276–288 (DQASQASTTSNPD) and 388–403 (SIPSKPSQDRPPSSSL). The cDENN FLCN/SMCR8-type domain maps to 318–835 (KLKTLEELCD…LVPRLADHRT (518 aa)). Ser402 is modified (phosphoserine; by TBK1). Ser417, Ser468, Ser471, Ser489, Ser492, and Ser498 each carry phosphoserine. The disordered stretch occupies residues 564-645 (PELGETEEGS…NPSSRDNSCE (82 aa)). The segment covering 574-583 (IENTPSQIDS) has biased composition (polar residues). Ser790 is modified (phosphoserine). At Thr796 the chain carries Phosphothreonine; by TBK1. Residues 844–910 (YLHVQSMLTQ…VVQYLAELLK (67 aa)) form the dDENN FLCN/SMCR8-type domain. The tract at residues 862–914 (TFCHHLHLPTHDKETEELVASRQMSFLKLTLGLVNEDVRVVQYLAELLKLHYM) is interacts with WDR41 within the C9orf72-SMCR8 complex.

It belongs to the SMCR8 family. As to quaternary structure, component of the C9orf72-SMCR8 complex, at least composed of C9orf72, SMCR8 and WDR41. The complex is formed of two protomers, each individually consisting of one molecule each of C9orf72, SMCR8 and WDR41. The protomers homodimerize via an interaction between C9orf72 (via C-terminus) and SMCR8 (via N-terminus). Within each protomer SMCR8 (via DENN domain) acts as a bridging protein between WDR41 (via C-terminus and N-terminus) and C9orf72 (via C-terminus). The C9orf72-SMCR8 complex associates with the ULK1/ATG1 kinase complex. Interacts with C9orf72; the interaction is direct. Interacts with DLG4/PSD-95. Phosphorylation by TBK1 is required to promote autophagosome maturation. Phosphorylated by ULK1. Expressed in all tissues tested.

It is found in the cytoplasm. The protein localises to the nucleus. Its subcellular location is the presynapse. The protein resides in the postsynapse. In terms of biological role, component of the C9orf72-SMCR8 complex, a complex that has guanine nucleotide exchange factor (GEF) activity and regulates autophagy. In the complex, C9orf72 and SMCR8 probably constitute the catalytic subunits that promote the exchange of GDP to GTP, converting inactive GDP-bound RAB8A and RAB39B into their active GTP-bound form, thereby promoting autophagosome maturation. The C9orf72-SMCR8 complex also acts as a negative regulator of autophagy initiation by interacting with the ULK1/ATG1 kinase complex and inhibiting its protein kinase activity. As part of the C9orf72-SMCR8 complex, stimulates RAB8A and RAB11A GTPase activity in vitro. Acts as a regulator of mTORC1 signaling by promoting phosphorylation of mTORC1 substrates. In addition to its activity in the cytoplasm within the C9orf72-SMCR8 complex, SMCR8 also localizes in the nucleus, where it associates with chromatin and negatively regulates expression of suppresses ULK1 and WIPI2 genes. This Homo sapiens (Human) protein is Guanine nucleotide exchange protein SMCR8.